A 637-amino-acid chain; its full sequence is Transmembrane 9 superfamily member 10 (637 aa).

The first 23 residues, 1–23 (MAKVRILIFTLVLFFSLNVHIHG), serve as a signal peptide directing secretion. At 24–274 (FYLPGVAPQD…YLLMADDQIH (251 aa)) the chain is on the lumenal side. Residues 275–295 (WFSIVNSMMIVLFLSGMVAMI) traverse the membrane as a helical segment. Over 296 to 344 (MLRTLYRDISNYNQLESHEEALEETGWKLVHGDVFRPPTNPELLCVYAG) the chain is Cytoplasmic. A helical membrane pass occupies residues 345-365 (TGVQCFGMILVTMIFACLGFL). Topologically, residues 366 to 370 (SPSNR) are lumenal. Residues 371-391 (GGLMTAMLLLWVFMGLLAGYA) form a helical membrane-spanning segment. Residues 392 to 411 (SSRLYKTLRGTEWKRNALKT) are Cytoplasmic-facing. The helical transmembrane segment at 412-432 (AFMFPATVFVAFFVLNAIIWG) threads the bilayer. Topologically, residues 433–444 (QKSSGAVPFGTM) are lumenal. A helical membrane pass occupies residues 445–465 (FALVVLWFGISVPLVFIGGYI). Residues 466–494 (GFRKPAPEDPVKTNKIPRQIPTQAWYMNP) lie on the Cytoplasmic side of the membrane. Residues 495 to 515 (IFSILIGGILPFGAVFIELFF) form a helical membrane-spanning segment. The Lumenal segment spans residues 516–527 (ILTSIWLHQFYY). Residues 528–548 (IFGFLFIVFIILIITCAEITV) traverse the membrane as a helical segment. The Cytoplasmic portion of the chain corresponds to 549–566 (VLCYFQLCSEDYQWWWRS). Residues 567–587 (YLTSGSSAVYLFLYAVFYFYT) traverse the membrane as a helical segment. Over 588–593 (KLEITK) the chain is Lumenal. The chain crosses the membrane as a helical span at residues 594 to 614 (LVSAVLYFGYMLIVSYVFFVF). Residues 615 to 637 (TGAIGFYACFWFTRLIYSSVKID) are Cytoplasmic-facing. Positions 626–631 (FTRLIY) match the Endoplasmic reticulum export signal motif. A Golgi retention signal motif is present at residues 635 to 637 (KID).

Belongs to the nonaspanin (TM9SF) (TC 9.A.2) family.

The protein resides in the endosome membrane. It localises to the golgi apparatus membrane. In Arabidopsis thaliana (Mouse-ear cress), this protein is Transmembrane 9 superfamily member 10.